The sequence spans 296 residues: Release factor glutamine methyltransferase (296 aa).

Residues 133 to 137 (GTGSG), aspartate 156, and asparagine 201 contribute to the S-adenosyl-L-methionine site. 201–204 (NPPY) lines the substrate pocket.

The protein belongs to the protein N5-glutamine methyltransferase family. PrmC subfamily.

It carries out the reaction L-glutaminyl-[peptide chain release factor] + S-adenosyl-L-methionine = N(5)-methyl-L-glutaminyl-[peptide chain release factor] + S-adenosyl-L-homocysteine + H(+). Methylates the class 1 translation termination release factors RF1/PrfA and RF2/PrfB on the glutamine residue of the universally conserved GGQ motif. The polypeptide is Release factor glutamine methyltransferase (Rhodopirellula baltica (strain DSM 10527 / NCIMB 13988 / SH1)).